The chain runs to 193 residues: uncharacterized protein (193 aa).

Residues 153 to 170 traverse the membrane as a helical segment; sequence WRYWAVIALIAAVLIYLY.

It is found in the membrane. This is an uncharacterized protein from Invertebrate iridescent virus 6 (IIV-6).